The sequence spans 471 residues: Mannose-1-phosphate guanylyltransferase (471 aa).

It belongs to the mannose-6-phosphate isomerase type 2 family.

The catalysed reaction is alpha-D-mannose 1-phosphate + GTP + H(+) = GDP-alpha-D-mannose + diphosphate. Its pathway is nucleotide-sugar biosynthesis; GDP-alpha-D-mannose biosynthesis; GDP-alpha-D-mannose from alpha-D-mannose 1-phosphate (GTP route): step 1/1. Functionally, involved in the biosynthesis of the K2 capsular polysaccharide biosynthesis. In Klebsiella pneumoniae, this protein is Mannose-1-phosphate guanylyltransferase (manC).